A 307-amino-acid chain; its full sequence is UDP-N-acetylenolpyruvoylglucosamine reductase (307 aa).

The FAD-binding PCMH-type domain maps to 34 to 197 (VGGNAEALFR…LSASLKGRPG (164 aa)). Arg177 is a catalytic residue. Ser226 functions as the Proton donor in the catalytic mechanism. Glu296 is an active-site residue.

This sequence belongs to the MurB family. The cofactor is FAD.

Its subcellular location is the cytoplasm. It catalyses the reaction UDP-N-acetyl-alpha-D-muramate + NADP(+) = UDP-N-acetyl-3-O-(1-carboxyvinyl)-alpha-D-glucosamine + NADPH + H(+). Its pathway is cell wall biogenesis; peptidoglycan biosynthesis. In terms of biological role, cell wall formation. The chain is UDP-N-acetylenolpyruvoylglucosamine reductase from Paramagnetospirillum magneticum (strain ATCC 700264 / AMB-1) (Magnetospirillum magneticum).